We begin with the raw amino-acid sequence, 810 residues long: Leucine--tRNA ligase (810 aa).

Residues 43–53 carry the 'HIGH' region motif; that stretch reads PYPSGTLHIGH. The 'KMSKS' region motif lies at 578-582; that stretch reads KMSKS. Residue lysine 581 coordinates ATP.

Belongs to the class-I aminoacyl-tRNA synthetase family.

The protein localises to the cytoplasm. The enzyme catalyses tRNA(Leu) + L-leucine + ATP = L-leucyl-tRNA(Leu) + AMP + diphosphate. This is Leucine--tRNA ligase from Solibacter usitatus (strain Ellin6076).